Here is a 339-residue protein sequence, read N- to C-terminus: N-acetyl-gamma-glutamyl-phosphate reductase (339 aa).

Cys-145 is a catalytic residue.

This sequence belongs to the NAGSA dehydrogenase family. Type 1 subfamily.

Its subcellular location is the cytoplasm. The catalysed reaction is N-acetyl-L-glutamate 5-semialdehyde + phosphate + NADP(+) = N-acetyl-L-glutamyl 5-phosphate + NADPH + H(+). Its pathway is amino-acid biosynthesis; L-arginine biosynthesis; N(2)-acetyl-L-ornithine from L-glutamate: step 3/4. Functionally, catalyzes the NADPH-dependent reduction of N-acetyl-5-glutamyl phosphate to yield N-acetyl-L-glutamate 5-semialdehyde. The chain is N-acetyl-gamma-glutamyl-phosphate reductase from Thermotoga petrophila (strain ATCC BAA-488 / DSM 13995 / JCM 10881 / RKU-1).